The chain runs to 88 residues: Large ribosomal subunit protein bL31B (88 aa).

The protein belongs to the bacterial ribosomal protein bL31 family. Type B subfamily. In terms of assembly, part of the 50S ribosomal subunit.

This Bordetella bronchiseptica (strain ATCC BAA-588 / NCTC 13252 / RB50) (Alcaligenes bronchisepticus) protein is Large ribosomal subunit protein bL31B.